A 169-amino-acid polypeptide reads, in one-letter code: Phosphopantetheine adenylyltransferase (169 aa).

Thr-9 lines the substrate pocket. Residues 9–10 (TF) and His-17 each bind ATP. Substrate is bound by residues Lys-41, Leu-73, and Arg-87. ATP is bound by residues 88-90 (GLR), Glu-98, and 123-129 (YQFISGT).

This sequence belongs to the bacterial CoaD family. In terms of assembly, homohexamer. Mg(2+) is required as a cofactor.

The protein resides in the cytoplasm. The catalysed reaction is (R)-4'-phosphopantetheine + ATP + H(+) = 3'-dephospho-CoA + diphosphate. The protein operates within cofactor biosynthesis; coenzyme A biosynthesis; CoA from (R)-pantothenate: step 4/5. In terms of biological role, reversibly transfers an adenylyl group from ATP to 4'-phosphopantetheine, yielding dephospho-CoA (dPCoA) and pyrophosphate. This is Phosphopantetheine adenylyltransferase from Bordetella bronchiseptica (strain ATCC BAA-588 / NCTC 13252 / RB50) (Alcaligenes bronchisepticus).